The chain runs to 250 residues: DNA repair protein RecO (250 aa).

Belongs to the RecO family.

Involved in DNA repair and RecF pathway recombination. The chain is DNA repair protein RecO from Beijerinckia indica subsp. indica (strain ATCC 9039 / DSM 1715 / NCIMB 8712).